Reading from the N-terminus, the 439-residue chain is Glutamine synthetase (439 aa).

One can recognise a GS beta-grasp domain in the interval 13-98 (ENVRFIRLQF…VICDVYTPDG (86 aa)). In terms of domain architecture, GS catalytic spans 105–439 (PRYRLRRMME…NWELQRYLYL (335 aa)). Positions 128 and 130 each coordinate Mg(2+). Residue Glu-180 coordinates ATP. Mg(2+) contacts are provided by Glu-185 and Glu-192. Residues 236–237 (NG) and Gly-237 contribute to the L-glutamate site. A Mg(2+)-binding site is contributed by His-241. Residues 243–245 (HMS) and Ser-245 contribute to the ATP site. L-glutamate contacts are provided by Arg-294, Glu-300, and Arg-312. ATP-binding residues include Arg-312, Arg-317, and Lys-324. Glu-329 contributes to the Mg(2+) binding site. Arg-331 serves as a coordination point for L-glutamate.

It belongs to the glutamine synthetase family. In terms of assembly, oligomer of 12 subunits arranged in the form of two hexagons. In its feedback-inhibited form, interacts with TnrA in order to block its DNA-binding activity. It depends on Mg(2+) as a cofactor.

Its subcellular location is the cytoplasm. It carries out the reaction L-glutamate + NH4(+) + ATP = L-glutamine + ADP + phosphate + H(+). Inhibited by glutamine. In terms of biological role, glutamine synthetase (GS) is an unusual multitasking protein that functions as an enzyme, a transcription coregulator, and a chaperone in ammonium assimilation and in the regulation of genes involved in nitrogen metabolism. It catalyzes the ATP-dependent biosynthesis of glutamine from glutamate and ammonia. Feedback-inhibited GlnA also interacts with and regulates the activity of the transcriptional regulator TnrA. During nitrogen limitation, TnrA is in its DNA-binding active state and turns on the transcription of genes required for nitrogen assimilation. Under conditions of nitrogen excess, feedback-inhibited GlnA forms a stable complex with TnrA, which inhibits its DNA-binding activity. In contrast, feedback-inhibited GlnA acts as a chaperone to stabilize the DNA-binding activity of GlnR, which represses the transcription of nitrogen assimilation genes. This chain is Glutamine synthetase, found in Thermotoga maritima (strain ATCC 43589 / DSM 3109 / JCM 10099 / NBRC 100826 / MSB8).